Consider the following 417-residue polypeptide: Gamma-glutamyl phosphate reductase (417 aa).

It belongs to the gamma-glutamyl phosphate reductase family.

The protein resides in the cytoplasm. It carries out the reaction L-glutamate 5-semialdehyde + phosphate + NADP(+) = L-glutamyl 5-phosphate + NADPH + H(+). Its pathway is amino-acid biosynthesis; L-proline biosynthesis; L-glutamate 5-semialdehyde from L-glutamate: step 2/2. Its function is as follows. Catalyzes the NADPH-dependent reduction of L-glutamate 5-phosphate into L-glutamate 5-semialdehyde and phosphate. The product spontaneously undergoes cyclization to form 1-pyrroline-5-carboxylate. In Legionella pneumophila (strain Corby), this protein is Gamma-glutamyl phosphate reductase.